The chain runs to 716 residues: Fatty acid oxidation complex subunit alpha (716 aa).

The segment at 1 to 189 (MIYQSPTIQV…KVGAVDSVVA (189 aa)) is enoyl-CoA hydratase/isomerase. Residue Asp-296 coordinates substrate. The tract at residues 311–716 (KEVNNAAVLG…AANNGSYYQA (406 aa)) is 3-hydroxyacyl-CoA dehydrogenase. NAD(+)-binding positions include Met-324, Asp-343, 400-402 (VVE), Lys-407, and Ser-429. The active-site For 3-hydroxyacyl-CoA dehydrogenase activity is His-450. Asn-453 provides a ligand contact to NAD(+). Positions 500 and 660 each coordinate substrate.

It in the N-terminal section; belongs to the enoyl-CoA hydratase/isomerase family. The protein in the C-terminal section; belongs to the 3-hydroxyacyl-CoA dehydrogenase family. In terms of assembly, heterotetramer of two alpha chains (FadB) and two beta chains (FadA).

It catalyses the reaction a (3S)-3-hydroxyacyl-CoA + NAD(+) = a 3-oxoacyl-CoA + NADH + H(+). It carries out the reaction a (3S)-3-hydroxyacyl-CoA = a (2E)-enoyl-CoA + H2O. The catalysed reaction is a 4-saturated-(3S)-3-hydroxyacyl-CoA = a (3E)-enoyl-CoA + H2O. The enzyme catalyses (3S)-3-hydroxybutanoyl-CoA = (3R)-3-hydroxybutanoyl-CoA. It catalyses the reaction a (3Z)-enoyl-CoA = a 4-saturated (2E)-enoyl-CoA. It carries out the reaction a (3E)-enoyl-CoA = a 4-saturated (2E)-enoyl-CoA. It functions in the pathway lipid metabolism; fatty acid beta-oxidation. Involved in the aerobic and anaerobic degradation of long-chain fatty acids via beta-oxidation cycle. Catalyzes the formation of 3-oxoacyl-CoA from enoyl-CoA via L-3-hydroxyacyl-CoA. It can also use D-3-hydroxyacyl-CoA and cis-3-enoyl-CoA as substrate. This is Fatty acid oxidation complex subunit alpha from Shewanella baltica (strain OS185).